A 365-amino-acid polypeptide reads, in one-letter code: LIM and cysteine-rich domains protein 1 (365 aa).

The residue at position 16 (S16) is a Phosphoserine. The region spanning 99–206 (MIMTNPIATG…GEVALPGQGG (108 aa)) is the PET domain. Positions 200–235 (ALPGQGGLPKEEGKQQEKPEGAETTAATTNGSLSDP) are disordered. Basic and acidic residues predominate over residues 208 to 220 (PKEEGKQQEKPEG). 2 consecutive LIM zinc-binding domains span residues 241-306 (YVCE…SLRP) and 307-365 (RCSG…SKRS).

Interacts with GATA1 and GATA4. Interacts with beta-dystroglycan. Interacts with GATA6. In terms of tissue distribution, expressed in the heart (at protein level). Expressed in many tissues with highest abundance in skeletal muscle.

Its subcellular location is the cytoplasm. It localises to the nucleus. Its function is as follows. Transcriptional cofactor that restricts GATA6 function by inhibiting DNA-binding, resulting in repression of GATA6 transcriptional activation of downstream target genes. Represses GATA6-mediated trans activation of lung- and cardiac tissue-specific promoters. Inhibits DNA-binding by GATA4 and GATA1 to the cTNC promoter. Plays a critical role in the development of cardiac hypertrophy via activation of calcineurin/nuclear factor of activated T-cells signaling pathway. This Homo sapiens (Human) protein is LIM and cysteine-rich domains protein 1 (LMCD1).